The sequence spans 202 residues: ATP-dependent Clp protease proteolytic subunit (202 aa).

The active-site Nucleophile is Ser101. The active site involves His126.

This sequence belongs to the peptidase S14 family. As to quaternary structure, component of the chloroplastic Clp protease core complex.

The protein localises to the plastid. It localises to the chloroplast stroma. The enzyme catalyses Hydrolysis of proteins to small peptides in the presence of ATP and magnesium. alpha-casein is the usual test substrate. In the absence of ATP, only oligopeptides shorter than five residues are hydrolyzed (such as succinyl-Leu-Tyr-|-NHMec, and Leu-Tyr-Leu-|-Tyr-Trp, in which cleavage of the -Tyr-|-Leu- and -Tyr-|-Trp bonds also occurs).. In terms of biological role, cleaves peptides in various proteins in a process that requires ATP hydrolysis. Has a chymotrypsin-like activity. Plays a major role in the degradation of misfolded proteins. The chain is ATP-dependent Clp protease proteolytic subunit from Calycanthus floridus var. glaucus (Eastern sweetshrub).